Consider the following 242-residue polypeptide: Ribonuclease 3 (242 aa).

One can recognise an RNase III domain in the interval 7–136; that stretch reads LEALQNLLGY…LLASIYLDGG (130 aa). A Mg(2+)-binding site is contributed by Glu-49. Asp-53 is a catalytic residue. Mg(2+) is bound by residues Asp-122 and Glu-125. Glu-125 is an active-site residue. The 70-residue stretch at 167–236 folds into the DRBM domain; that stretch reads DYKTQLQELT…AEKALQIIAA (70 aa).

This sequence belongs to the ribonuclease III family. As to quaternary structure, homodimer. Mg(2+) is required as a cofactor.

It is found in the cytoplasm. The catalysed reaction is Endonucleolytic cleavage to 5'-phosphomonoester.. Its function is as follows. Digests double-stranded RNA. Involved in the processing of primary rRNA transcript to yield the immediate precursors to the large and small rRNAs (23S and 16S). Processes some mRNAs, and tRNAs when they are encoded in the rRNA operon. Processes pre-crRNA and tracrRNA of type II CRISPR loci if present in the organism. The protein is Ribonuclease 3 of Syntrophobacter fumaroxidans (strain DSM 10017 / MPOB).